A 275-amino-acid polypeptide reads, in one-letter code: Large ribosomal subunit protein uL2 (275 aa).

Residues 236-263 are disordered; the sequence is EGRGKGQHPVTPWGMPTKGYKTRRGRRA.

Belongs to the universal ribosomal protein uL2 family. As to quaternary structure, part of the 50S ribosomal subunit. Forms a bridge to the 30S subunit in the 70S ribosome.

Functionally, one of the primary rRNA binding proteins. Required for association of the 30S and 50S subunits to form the 70S ribosome, for tRNA binding and peptide bond formation. It has been suggested to have peptidyltransferase activity; this is somewhat controversial. Makes several contacts with the 16S rRNA in the 70S ribosome. The sequence is that of Large ribosomal subunit protein uL2 from Pseudothermotoga lettingae (strain ATCC BAA-301 / DSM 14385 / NBRC 107922 / TMO) (Thermotoga lettingae).